The chain runs to 332 residues: MPNSTSQVTKLKSKNNEFSYTADAVSIYLHKIGRVPLLSHEQEIFFAQQVQQMMVMFTAKEELAEKLQREPTLQEWADKMQLKEDVLLQQLSQGQIAKQKMIQANLRLVVSIAKKYQKRNLEFLDLIQEGALGLERGVEKFDPTLGYKFSTYAYWWIRQGITRAIAQQSRTIRLPIHMADKLNKIKCVQRELSQKLGYIAGVTEIAQALNLEPSQIREYLQLVRQPVSLDMRIGFEQDTQLQDLLKDDGMSPERYAERELLYQDIHNLLAKLTPQQKEVLILRFGLAGGCELTLVQISQRMGISRERVRQVEKQALTLLRRYGIDSRSYLAD.

A Polymerase core binding motif is present at residues 125-138 (DLIQEGALGLERGV). Positions 294-313 (LVQISQRMGISRERVRQVEK) form a DNA-binding region, H-T-H motif.

It belongs to the sigma-70 factor family.

Functionally, sigma factors are initiation factors that promote the attachment of RNA polymerase to specific initiation sites and are then released. In Nostoc sp. (strain PCC 7120 / SAG 25.82 / UTEX 2576), this protein is RNA polymerase sigma-B factor (sigB).